Reading from the N-terminus, the 379-residue chain is Alcohol dehydrogenase class-2 isozyme 1 (379 aa).

Residues Cys47, His69, Cys99, Cys102, Cys105, Cys113, and Cys176 each contribute to the Zn(2+) site. Residues 205-210 (GLGGVG), Asp229, Lys234, 298-300 (VGV), and Arg374 each bind NAD(+).

This sequence belongs to the zinc-containing alcohol dehydrogenase family. Class-II subfamily. Homodimer. Zn(2+) is required as a cofactor.

It is found in the cytoplasm. It catalyses the reaction a primary alcohol + NAD(+) = an aldehyde + NADH + H(+). The catalysed reaction is a secondary alcohol + NAD(+) = a ketone + NADH + H(+). The polypeptide is Alcohol dehydrogenase class-2 isozyme 1 (ADH2-1) (Oryctolagus cuniculus (Rabbit)).